A 306-amino-acid polypeptide reads, in one-letter code: Dermonecrotic toxin LiSicTox-alphaIA2bi (306 aa).

A signal peptide spans 1–18 (MLPYIALILVCWSVLSQA). Positions 19-26 (AQTDVEGR) are excised as a propeptide. The active site involves histidine 38. Mg(2+)-binding residues include glutamate 58 and aspartate 60. Histidine 74 acts as the Nucleophile in catalysis. Intrachain disulfides connect cysteine 78/cysteine 84 and cysteine 80/cysteine 223. Mg(2+) is bound at residue aspartate 118. The N-linked (GlcNAc...) asparagine glycan is linked to asparagine 283.

Belongs to the arthropod phospholipase D family. Class II subfamily. Requires Mg(2+) as cofactor. In terms of tissue distribution, expressed by the venom gland.

The protein resides in the secreted. It catalyses the reaction an N-(acyl)-sphingosylphosphocholine = an N-(acyl)-sphingosyl-1,3-cyclic phosphate + choline. The enzyme catalyses an N-(acyl)-sphingosylphosphoethanolamine = an N-(acyl)-sphingosyl-1,3-cyclic phosphate + ethanolamine. It carries out the reaction a 1-acyl-sn-glycero-3-phosphocholine = a 1-acyl-sn-glycero-2,3-cyclic phosphate + choline. The catalysed reaction is a 1-acyl-sn-glycero-3-phosphoethanolamine = a 1-acyl-sn-glycero-2,3-cyclic phosphate + ethanolamine. In terms of biological role, dermonecrotic toxins cleave the phosphodiester linkage between the phosphate and headgroup of certain phospholipids (sphingolipid and lysolipid substrates), forming an alcohol (often choline) and a cyclic phosphate. This toxin acts on sphingomyelin (SM). It may also act on ceramide phosphoethanolamine (CPE), lysophosphatidylcholine (LPC) and lysophosphatidylethanolamine (LPE), but not on lysophosphatidylserine (LPS), and lysophosphatidylglycerol (LPG). It acts by transphosphatidylation, releasing exclusively cyclic phosphate products as second products. Induces dermonecrosis, hemolysis, increased vascular permeability, edema, inflammatory response, and platelet aggregation. This Loxosceles intermedia (Brown spider) protein is Dermonecrotic toxin LiSicTox-alphaIA2bi.